A 318-amino-acid polypeptide reads, in one-letter code: Ribosome biogenesis protein RLP7 (318 aa).

Disordered stretches follow at residues 1–49 and 101–121; these read MSQP…NRFV and AGSK…DEED. Over residues 19 to 40 the composition is skewed to basic and acidic residues; it reads ADRTRLEKQELAKKRKEQEEKQ. Positions 110 to 121 are enriched in acidic residues; the sequence is ELQDVDEEDEED.

Belongs to the universal ribosomal protein uL30 family.

It localises to the nucleus. It is found in the nucleolus. Functionally, involved in the biogenesis of the 60S ribosomal subunit. May act as a specificity factor that binds precursor rRNAs and tethers the enzymes that carry out the early 5' to 3' exonucleolytic reactions that generate the mature rRNAs. This chain is Ribosome biogenesis protein RLP7 (RLP7), found in Kluyveromyces lactis (strain ATCC 8585 / CBS 2359 / DSM 70799 / NBRC 1267 / NRRL Y-1140 / WM37) (Yeast).